The following is a 52-amino-acid chain: ATP synthase protein 8 (52 aa).

The chain crosses the membrane as a helical span at residues proline 6–asparagine 26.

This sequence belongs to the ATPase protein 8 family. F-type ATPases have 2 components, CF(1) - the catalytic core - and CF(0) - the membrane proton channel.

The protein localises to the mitochondrion membrane. Mitochondrial membrane ATP synthase (F(1)F(0) ATP synthase or Complex V) produces ATP from ADP in the presence of a proton gradient across the membrane which is generated by electron transport complexes of the respiratory chain. F-type ATPases consist of two structural domains, F(1) - containing the extramembraneous catalytic core and F(0) - containing the membrane proton channel, linked together by a central stalk and a peripheral stalk. During catalysis, ATP synthesis in the catalytic domain of F(1) is coupled via a rotary mechanism of the central stalk subunits to proton translocation. Part of the complex F(0) domain. Minor subunit located with subunit a in the membrane. In Albinaria turrita (Door snail), this protein is ATP synthase protein 8 (MT-ATP8).